The sequence spans 178 residues: Large ribosomal subunit protein uL6 (178 aa).

The protein belongs to the universal ribosomal protein uL6 family. Part of the 50S ribosomal subunit.

Its function is as follows. This protein binds to the 23S rRNA, and is important in its secondary structure. It is located near the subunit interface in the base of the L7/L12 stalk, and near the tRNA binding site of the peptidyltransferase center. The polypeptide is Large ribosomal subunit protein uL6 (Geobacillus kaustophilus (strain HTA426)).